Consider the following 148-residue polypeptide: MF7 protein (148 aa).

This is MF7 protein from Myxoma virus (strain Lausanne) (MYXV).